Reading from the N-terminus, the 560-residue chain is Dihydroxy-acid dehydratase (560 aa).

Cysteine 52 serves as a coordination point for [2Fe-2S] cluster. Mg(2+) is bound at residue aspartate 84. Cysteine 125 lines the [2Fe-2S] cluster pocket. Mg(2+)-binding residues include aspartate 126 and lysine 127. An N6-carboxylysine modification is found at lysine 127. Cysteine 197 contributes to the [2Fe-2S] cluster binding site. Glutamate 448 is a Mg(2+) binding site. Catalysis depends on serine 474, which acts as the Proton acceptor.

It belongs to the IlvD/Edd family. Homodimer. It depends on [2Fe-2S] cluster as a cofactor. The cofactor is Mg(2+).

The enzyme catalyses (2R)-2,3-dihydroxy-3-methylbutanoate = 3-methyl-2-oxobutanoate + H2O. It catalyses the reaction (2R,3R)-2,3-dihydroxy-3-methylpentanoate = (S)-3-methyl-2-oxopentanoate + H2O. It participates in amino-acid biosynthesis; L-isoleucine biosynthesis; L-isoleucine from 2-oxobutanoate: step 3/4. Its pathway is amino-acid biosynthesis; L-valine biosynthesis; L-valine from pyruvate: step 3/4. Functions in the biosynthesis of branched-chain amino acids. Catalyzes the dehydration of (2R,3R)-2,3-dihydroxy-3-methylpentanoate (2,3-dihydroxy-3-methylvalerate) into 2-oxo-3-methylpentanoate (2-oxo-3-methylvalerate) and of (2R)-2,3-dihydroxy-3-methylbutanoate (2,3-dihydroxyisovalerate) into 2-oxo-3-methylbutanoate (2-oxoisovalerate), the penultimate precursor to L-isoleucine and L-valine, respectively. This Francisella tularensis subsp. novicida (strain U112) protein is Dihydroxy-acid dehydratase.